A 278-amino-acid chain; its full sequence is Splicing factor YJU2 (278 aa).

4 residues coordinate Zn(2+): Cys-51, Cys-54, Cys-88, and Cys-91. Positions 228–278 (HRQRTNKPGNNNDEKRTPLFNPTSTKGKIQKKSSVRTNPLGIVIKRGKSLK) are disordered. 2 short sequence motifs (nuclear localization signal) span residues 242-258 (KRTPLFNPTSTKGKIQK) and 260-278 (SSVRTNPLGIVIKRGKSLK).

The protein belongs to the CWC16 family. YJU2 subfamily. In terms of assembly, component of the spliceosome. Present in the activated B complex, the catalytically activated B* complex which catalyzes the branching, the catalytic step 1 C complex catalyzing the exon ligation, and the postcatalytic P complex containing the ligated exons (mRNA) and the excised lariat intron. Interacts (via C-terminus) with CLF1. Interacts (via N-terminus) with SYF1. Interacts with U2 snRNA; this interaction is direct. Identified in the CWC complex (or CEF1-associated complex), a spliceosome sub-complex reminiscent of a late-stage spliceosome composed of the U2, U5 and U6 snRNAs and at least BUD13, BUD31, BRR2, CDC40, CEF1, CLF1, CUS1, CWC2, CWC15, CWC21, CWC22, CWC23, CWC24, CWC25, CWC27, ECM2, HSH155, IST3, ISY1, LEA1, MSL1, NTC20, PRP8, PRP9, PRP11, PRP19, PRP21, PRP22, PRP45, PRP46, SLU7, SMB1, SMD1, SMD2, SMD3, SMX2, SMX3, SNT309, SNU114, SPP2, SYF1, SYF2, RSE1 and YJU2.

It localises to the nucleus. Functionally, part of the spliceosome which catalyzes two sequential transesterification reactions, first the excision of the non-coding intron from pre-mRNA and then the ligation of the coding exons to form the mature mRNA. Plays a role (via N-terminus) in stabilizing the structure of the spliceosome catalytic core and docking of the branch helix into the active site, producing 5'-exon and lariat intron-3'-intermediates. Further stabilizes spliceosome conformation for 3'-splice site docking (via C-terminus) promoting exon ligation. The protein is Splicing factor YJU2 of Saccharomyces cerevisiae (strain ATCC 204508 / S288c) (Baker's yeast).